Here is a 232-residue protein sequence, read N- to C-terminus: Large ribosomal subunit protein uL1 (232 aa).

It belongs to the universal ribosomal protein uL1 family. As to quaternary structure, part of the 50S ribosomal subunit.

Its function is as follows. Binds directly to 23S rRNA. The L1 stalk is quite mobile in the ribosome, and is involved in E site tRNA release. In terms of biological role, protein L1 is also a translational repressor protein, it controls the translation of the L11 operon by binding to its mRNA. In Thermosipho melanesiensis (strain DSM 12029 / CIP 104789 / BI429), this protein is Large ribosomal subunit protein uL1.